Reading from the N-terminus, the 273-residue chain is Diphthine methyl ester synthase (273 aa).

S-adenosyl-L-methionine is bound by residues leucine 10, aspartate 87, glycine 90, 115–116 (SI), leucine 166, valine 224, and histidine 249.

The protein belongs to the diphthine synthase family.

It catalyses the reaction 2-[(3S)-amino-3-carboxypropyl]-L-histidyl-[translation elongation factor 2] + 4 S-adenosyl-L-methionine = diphthine methyl ester-[translation elongation factor 2] + 4 S-adenosyl-L-homocysteine + 3 H(+). It functions in the pathway protein modification; peptidyl-diphthamide biosynthesis. S-adenosyl-L-methionine-dependent methyltransferase that catalyzes four methylations of the modified target histidine residue in translation elongation factor 2 (EF-2), to form an intermediate called diphthine methyl ester. The four successive methylation reactions represent the second step of diphthamide biosynthesis. The polypeptide is Diphthine methyl ester synthase (dph5) (Dictyostelium discoideum (Social amoeba)).